The primary structure comprises 291 residues: Putative carboxymethylenebutenolidase (291 aa).

Residues M1–A40 form the signal peptide. Active-site residues include C170, D227, and H259.

It belongs to the dienelactone hydrolase family.

The catalysed reaction is 2-(5-oxo-2,5-dihydrofuran-2-ylidene)acetate + H2O = 4-oxohex-2-enedioate + H(+). This is Putative carboxymethylenebutenolidase from Methylorubrum extorquens (strain ATCC 14718 / DSM 1338 / JCM 2805 / NCIMB 9133 / AM1) (Methylobacterium extorquens).